A 359-amino-acid polypeptide reads, in one-letter code: uncharacterized protein (359 aa).

It belongs to the glycosyltransferase group 1 family. Glycosyltransferase 4 subfamily.

This is an uncharacterized protein from Bacillus subtilis (strain 168).